A 205-amino-acid polypeptide reads, in one-letter code: MSIKYIASSKLPTPWGVFEMHGFEDSETGKEHVALTLGVFDAESPILGRIHSECLTGDALFSLRCDCGFQLQTAMQNIAEAGQGFILYLRQEGRGIGLLNKIRAYELQDGGANTVEANERLGFAADMRKYDMIIPMMEQIGISKVRLMTNNPRKVKAMQSFGLEVVERVPLQVGKNRYNEGYLKTKSTELGHMMSEHHFTEEGKD.

Position 49-53 (49-53 (RIHSE)) interacts with GTP. Residues cysteine 54, cysteine 65, and cysteine 67 each contribute to the Zn(2+) site. GTP-binding positions include glutamine 70, 92–94 (EGR), and threonine 114. Aspartate 126 acts as the Proton acceptor in catalysis. Arginine 128 acts as the Nucleophile in catalysis. GTP contacts are provided by threonine 149 and lysine 154.

The protein belongs to the GTP cyclohydrolase II family. Requires Zn(2+) as cofactor.

The catalysed reaction is GTP + 4 H2O = 2,5-diamino-6-hydroxy-4-(5-phosphoribosylamino)-pyrimidine + formate + 2 phosphate + 3 H(+). Its pathway is cofactor biosynthesis; riboflavin biosynthesis; 5-amino-6-(D-ribitylamino)uracil from GTP: step 1/4. Its function is as follows. Catalyzes the conversion of GTP to 2,5-diamino-6-ribosylamino-4(3H)-pyrimidinone 5'-phosphate (DARP), formate and pyrophosphate. This is GTP cyclohydrolase-2 from Shewanella piezotolerans (strain WP3 / JCM 13877).